A 693-amino-acid polypeptide reads, in one-letter code: DNA ligase (693 aa).

NAD(+) is bound by residues 40 to 44, 89 to 90, and E121; these read DSEYD and SL. The N6-AMP-lysine intermediate role is filled by K123. 4 residues coordinate NAD(+): R144, E179, K295, and K319. Zn(2+) is bound by residues C413, C416, C431, and C437. Residues 610–693 enclose the BRCT domain; it reads REQNILTGKI…AFIKCLEKEV (84 aa).

The protein belongs to the NAD-dependent DNA ligase family. LigA subfamily. It depends on Mg(2+) as a cofactor. The cofactor is Mn(2+).

The catalysed reaction is NAD(+) + (deoxyribonucleotide)n-3'-hydroxyl + 5'-phospho-(deoxyribonucleotide)m = (deoxyribonucleotide)n+m + AMP + beta-nicotinamide D-nucleotide.. Functionally, DNA ligase that catalyzes the formation of phosphodiester linkages between 5'-phosphoryl and 3'-hydroxyl groups in double-stranded DNA using NAD as a coenzyme and as the energy source for the reaction. It is essential for DNA replication and repair of damaged DNA. The polypeptide is DNA ligase (Rickettsia typhi (strain ATCC VR-144 / Wilmington)).